A 383-amino-acid chain; its full sequence is N-acetyldiaminopimelate deacetylase (383 aa).

Asp75 is an active-site residue. The Proton acceptor role is filled by Glu134.

It belongs to the peptidase M20A family. N-acetyldiaminopimelate deacetylase subfamily.

The catalysed reaction is N-acetyl-(2S,6S)-2,6-diaminopimelate + H2O = (2S,6S)-2,6-diaminopimelate + acetate. It participates in amino-acid biosynthesis; L-lysine biosynthesis via DAP pathway; LL-2,6-diaminopimelate from (S)-tetrahydrodipicolinate (acetylase route): step 3/3. Catalyzes the conversion of N-acetyl-diaminopimelate to diaminopimelate and acetate. The protein is N-acetyldiaminopimelate deacetylase of Lactobacillus acidophilus (strain ATCC 700396 / NCK56 / N2 / NCFM).